The sequence spans 380 residues: Elongation factor Ts, mitochondrial (380 aa).

This sequence belongs to the EF-Ts family.

The protein resides in the mitochondrion. In terms of biological role, associates with the EF-Tu.GDP complex and induces the exchange of GDP to GTP. It remains bound to the aminoacyl-tRNA.EF-Tu.GTP complex up to the GTP hydrolysis stage on the ribosome. This is Elongation factor Ts, mitochondrial from Plasmodium chabaudi chabaudi.